A 225-amino-acid polypeptide reads, in one-letter code: Insulin-induced gene 2 protein (225 aa).

The Cytoplasmic portion of the chain corresponds to 1 to 28 (MAEGETESPRPKKCGPYISSVTSQSVNV). A helical membrane pass occupies residues 29–51 (VIRGVVLFFIGVFLALVLNLLQI). The Lumenal segment spans residues 52-70 (QRNVTLFPPDVITSIFSSA). A helical transmembrane segment spans residues 71–88 (WWVPPCCGTASAVIGLLY). Over 89–103 (PCIDRHLGEPHKFKR) the chain is Cytoplasmic. A helical membrane pass occupies residues 104 to 126 (EWSSVMRCVAVFVGINHASAKVD). Topologically, residues 127–129 (FDN) are lumenal. A helical transmembrane segment spans residues 130–148 (NFQFSLTLAALSVGLWWTF). The Cytoplasmic portion of the chain corresponds to 149–153 (DRSRS). Residue Ser-151 is modified to Phosphoserine. The chain crosses the membrane as a helical span at residues 154–175 (GFGLGVGIAFLATVVTQLLVYN). Residues 176 to 189 (GVYQYTSPDFLYVR) are Lumenal-facing. A helical membrane pass occupies residues 190–207 (SWLPCIFFAGGITMGNIG). Residues 208–225 (RQLAMYECKVIAEKSHQE) lie on the Cytoplasmic side of the membrane. At Cys-215 the chain carries Cysteine sulfenic acid (-SOH); alternate. Residue Cys-215 forms a Glycyl cysteine thioester (Cys-Gly) (interchain with G-Cter in ubiquitin); alternate linkage. Positions 219-225 (AEKSHQE) match the KxHxx motif.

This sequence belongs to the INSIG family. Interacts with SCAP; interaction is direct and only takes place in the presence of sterols; it prevents interaction between SCAP and the coat protein complex II (COPII). Associates with the SCAP-SREBP complex (composed of SCAP and SREBF1/SREBP1 or SREBF2/SREBP2); association is mediated via its interaction with SCAP and only takes place in the presence of sterols. Interacts with RNF139. Interacts with RNF145. Post-translationally, phosphorylation at Ser-151 by PCK1 reduces binding to oxysterol, disrupting the interaction between INSIG2 and SCAP, thereby promoting nuclear translocation of SREBP proteins (SREBF1/SREBP1 or SREBF2/SREBP2) and subsequent transcription of downstream lipogenesis-related genes. Polyubiquitinated by AMFR/gp78 at Cys-215 in some tissues such as adipose tissues, undifferentiated myoblasts and liver, leading to its degradation. In differentiated myotubes, Cys-215 oxidation prevents ubiquitination at the same site, resulting in protein stabilization. In terms of processing, oxidized at Cys-215 in differentiated myotubes, preventing ubiquitination at the same site, and resulting in protein stabilization. Expressed in liver, testis, kidney, spleen, intestine, brain and adrenal gland.

The protein localises to the endoplasmic reticulum membrane. Functionally, oxysterol-binding protein that mediates feedback control of cholesterol synthesis by controlling both endoplasmic reticulum to Golgi transport of SCAP and degradation of HMGCR. Acts as a negative regulator of cholesterol biosynthesis by mediating the retention of the SCAP-SREBP complex in the endoplasmic reticulum, thereby blocking the processing of sterol regulatory element-binding proteins (SREBPs) SREBF1/SREBP1 and SREBF2/SREBP2. Binds oxysterol, including 22-hydroxycholesterol, 24-hydroxycholesterol, 25-hydroxycholesterol and 27-hydroxycholesterol, regulating interaction with SCAP and retention of the SCAP-SREBP complex in the endoplasmic reticulum. In presence of oxysterol, interacts with SCAP, retaining the SCAP-SREBP complex in the endoplasmic reticulum, thereby preventing SCAP from escorting SREBF1/SREBP1 and SREBF2/SREBP2 to the Golgi. Sterol deprivation or phosphorylation by PCK1 reduce oxysterol-binding, disrupting the interaction between INSIG2 and SCAP, thereby promoting Golgi transport of the SCAP-SREBP complex, followed by processing and nuclear translocation of SREBF1/SREBP1 and SREBF2/SREBP2. Also regulates cholesterol synthesis by regulating degradation of HMGCR: initiates the sterol-mediated ubiquitin-mediated endoplasmic reticulum-associated degradation (ERAD) of HMGCR via recruitment of the reductase to the ubiquitin ligase RNF139. In Mus musculus (Mouse), this protein is Insulin-induced gene 2 protein.